The primary structure comprises 129 residues: MIGDTMSGIIDSYIPVAIFLAVGLIMPPMTMFMVKQLSPRSKAASKYTTYESGSVPTGTARIQFNVEYYLYAIAFVLFDIEVLFLYPWATVYKGHGITSIAVVEMFVFIFILLFGYVYLWKKEALTWVK.

The next 3 helical transmembrane spans lie at 9 to 29 (IIDS…MPPM), 64 to 84 (FNVE…EVLF), and 95 to 115 (HGIT…LLFG).

The protein belongs to the complex I subunit 3 family. As to quaternary structure, the FPO complex is composed of at least 13 different subunits. FpoA, FpoH, FpoJ, FpoK, FpoL, FpoM and FpoN proteins constitute the membrane sector of the complex.

Its subcellular location is the cell membrane. The catalysed reaction is methanophenazine + reduced coenzyme F420-(gamma-L-Glu)(n) = dihydromethanophenazine + oxidized coenzyme F420-(gamma-L-Glu)(n) + H(+). In terms of biological role, component of the F(420)H(2) dehydrogenase (FPO complex) which is part of the energy-conserving F(420)H(2):heterodisulfide oxidoreductase system. The membrane-bound electron transfer system of the complex plays an important role in the metabolism of methylotrophic methanogens when the organisms grow on methanol or methylamines. Catalyzes the oxidation of methanophenazine to dihydromethanophenazine. It shuttles electrons from F(420)H(2), via FAD and iron-sulfur (Fe-S) centers, to methanophenazine (an electron carrier in the membrane). It couples the redox reaction to proton translocation (for every two electrons transferred, two hydrogen ions are translocated across the cytoplasmic membrane), and thus conserves the redox energy in a proton gradient. It also catalyzes the oxidation of F(420)H(2) with quinones such as 2,3-dimethyl-1,4-naphthoquinone, 2-methyl-1,4-naphthoquinone and tetramethyl-p-benzoquinone. The protein is F(420)H(2) dehydrogenase subunit A (fpoA) of Methanosarcina mazei (strain ATCC BAA-159 / DSM 3647 / Goe1 / Go1 / JCM 11833 / OCM 88) (Methanosarcina frisia).